A 293-amino-acid polypeptide reads, in one-letter code: Ribosomal RNA small subunit methyltransferase H (293 aa).

S-adenosyl-L-methionine-binding positions include 31 to 33 (GGY), aspartate 49, phenylalanine 76, aspartate 97, and glutamine 104.

This sequence belongs to the methyltransferase superfamily. RsmH family.

The protein localises to the cytoplasm. It carries out the reaction cytidine(1402) in 16S rRNA + S-adenosyl-L-methionine = N(4)-methylcytidine(1402) in 16S rRNA + S-adenosyl-L-homocysteine + H(+). Specifically methylates the N4 position of cytidine in position 1402 (C1402) of 16S rRNA. This Wolbachia sp. subsp. Drosophila simulans (strain wRi) protein is Ribosomal RNA small subunit methyltransferase H.